A 3175-amino-acid chain; its full sequence is Replicase polyprotein 1ab (3175 aa).

Residues 25–44 (CEHGAGLCCEVDGSTLCAEC) form a C4-type; atypical zinc finger. One can recognise a Peptidase C31 domain in the interval 66–156 (SPVPVGHKFL…PAANSLIVTT (91 aa)). Residues 157 to 260 (DQEQDGFCWL…WSCLPAGNYG (104 aa)) enclose the Peptidase C32 domain. Active-site for Nsp1 papain-like cysteine proteinase activity residues include C164 and H230. Positions 261–339 (GYNPPGDGAC…KQHWRVKRAK (79 aa)) are OTU-like. In terms of domain architecture, Peptidase C33 spans 261–360 (GYNPPGDGAC…RGICNCQRMS (100 aa)). The active-site For Nsp2 cysteine proteinase activity is the C270. C319 provides a ligand contact to Zn(2+). The active-site For Nsp2 cysteine proteinase activity is H332. Residues C349, C354, and C356 each contribute to the Zn(2+) site. Residues 386 to 451 (VVTPEGQPRP…TRLQGASTQE (66 aa)) are disordered. 7 consecutive transmembrane segments (helical) span residues 530-550 (AVIA…SFAI), 551-571 (GLIP…SSAN), 625-645 (FDAA…ILYL), 829-849 (LIGG…STFT), 903-923 (YWIA…RLAI), 935-955 (LVLL…SLAG), and 977-997 (LVTM…LMGL). The segment at 530–645 (AVIACLLPIW…DLCSFAILYL (116 aa)) is HD1. Residues 829-997 (LIGGWIYGIC…ALAVYSLMGL (169 aa)) form an HD2 region. The 204-residue stretch at 1065–1268 (GLFRSPKARG…MLIDGLSNRE (204 aa)) folds into the Peptidase S32 domain. Residues H1103, D1129, and S1184 each act as charge relay system; for 3C-like serine proteinase activity in the active site. 4 consecutive transmembrane segments (helical) span residues 1291 to 1311 (AYLP…KSVG), 1333 to 1353 (CLFH…WFYI), 1355 to 1375 (AAGT…MLFV), and 1385 to 1405 (GWAI…AALG). The interval 1291-1405 (AYLPYVLGFF…SITMLAAALG (115 aa)) is HD3. N1501 is a glycosylation site (N-linked (GlcNAc...) asparagine; by host). Positions 1577 to 1614 (NDTPVKPMPSRRRRKGLPKGAQLEWDRHQEEKRNAGDD) are disordered. Residues 1600 to 1612 (EWDRHQEEKRNAG) are compositionally biased toward basic and acidic residues. A NiRAN domain is found at 1716-1883 (LANPVEAVNQ…DKVAAAVSGD (168 aa)). One can recognise a RdRp catalytic domain in the interval 2116-2251 (KYCLETDLES…TTPNQHYAAS (136 aa)). The region spanning 2371–2438 (SAVCTVCGAA…SPKQMVPKVP (68 aa)) is the AV ZBD domain. Residues C2374, C2377, C2387, C2392, C2395, H2399, H2402, C2403, C2412, H2414, C2423, and C2426 each coordinate Zn(2+). The region spanning 2496 to 2661 (PGSHIAVPLQ…LRHFVSLEPL (166 aa)) is the (+)RNA virus helicase ATP-binding domain. Residue 2528 to 2535 (GPPGSGKT) coordinates ATP. Residues 2662–2793 (RVCHRFGAAV…PPTACHLGQE (132 aa)) form the (+)RNA virus helicase C-terminal domain. The region spanning 2840–2930 (KISCLPRVAQ…LTEWVDGKAR (91 aa)) is the AV-Nsp11N/CoV-Nsp15M domain. The NendoU domain maps to 2932–3054 (LPDSLFSSGR…MVWRNATFYV (123 aa)). Residues H2963, H2978, and K3007 contribute to the active site.

It belongs to the arteriviridae polyprotein family. Nsp1 interacts with cellular transcription cofactor SND1/p100. Post-translationally, specific enzymatic cleavages in vivo by its own proteases yield mature proteins. There are two alternative pathways for processing. Either nsp4-5 is cleaved, which represents the major pathway or the nsp5-6 and nsp6-7 are processed, which represents the minor pathway. The major pathway occurs when nsp2 acts as a cofactor for nsp4.

It localises to the host nucleus. Its subcellular location is the host cytoplasm. The protein localises to the host membrane. It is found in the host perinuclear region. It carries out the reaction RNA(n) + a ribonucleoside 5'-triphosphate = RNA(n+1) + diphosphate. It catalyses the reaction ATP + H2O = ADP + phosphate + H(+). The catalysed reaction is Thiol-dependent hydrolysis of ester, thioester, amide, peptide and isopeptide bonds formed by the C-terminal Gly of ubiquitin (a 76-residue protein attached to proteins as an intracellular targeting signal).. The enzyme catalyses uridylyl-uridylyl-ribonucleotide-RNA = a 3'-end uridylyl-2',3'-cyclophospho-uridine-RNA + a 5'-end dephospho-ribonucleoside-RNA. Its function is as follows. The replicase polyprotein 1ab is a multifunctional protein: it contains the activities necessary for the transcription of negative stranded RNA, leader RNA, subgenomic mRNAs and progeny virion RNA as well as proteinases responsible for the cleavage of the polyprotein into functional products. Functionally, nsp1 is essential for viral subgenomic mRNA synthesis. In terms of biological role, nsp2 cysteine proteinase which cleaves the nsp2/nsp3 site in the polyprotein. Also displays deubiquitinating and deISGylase activities. The deubiquitinating activity cleaves both ubiquitinated and ISGylated products and may therefore regulate ubiquitin and ISG15 dependent host innate immunity. The 3C-like serine proteinase chain is responsible for the majority of cleavages as it cleaves the C-terminus of the polyprotein. Its function is as follows. The helicase chain, which contains a zinc finger structure, displays RNA and DNA duplex-unwinding activities with 5' to 3' polarity. Functionally, plays a role in viral transcription/replication and prevents the simultaneous activation of host cell dsRNA sensors, such as MDA5/IFIH1, OAS, and PKR. Acts by degrading the 5'-polyuridines generated during replication of the poly(A) region of viral genomic and subgenomic RNAs. Catalyzes a two-step reaction in which a 2'3'-cyclic phosphate (2'3'-cP) is first generated by 2'-O transesterification, which is then hydrolyzed to a 3'-phosphate (3'-P). If not degraded, poly(U) RNA would hybridize with poly(A) RNA tails and activate host dsRNA sensors. This chain is Replicase polyprotein 1ab (rep), found in Equidae (horses).